Reading from the N-terminus, the 264-residue chain is Acyl-[acyl-carrier-protein]--UDP-N-acetylglucosamine O-acyltransferase (264 aa).

It belongs to the transferase hexapeptide repeat family. LpxA subfamily. Homotrimer.

It localises to the cytoplasm. The enzyme catalyses a (3R)-hydroxyacyl-[ACP] + UDP-N-acetyl-alpha-D-glucosamine = a UDP-3-O-[(3R)-3-hydroxyacyl]-N-acetyl-alpha-D-glucosamine + holo-[ACP]. It functions in the pathway glycolipid biosynthesis; lipid IV(A) biosynthesis; lipid IV(A) from (3R)-3-hydroxytetradecanoyl-[acyl-carrier-protein] and UDP-N-acetyl-alpha-D-glucosamine: step 1/6. Involved in the biosynthesis of lipid A, a phosphorylated glycolipid that anchors the lipopolysaccharide to the outer membrane of the cell. The protein is Acyl-[acyl-carrier-protein]--UDP-N-acetylglucosamine O-acyltransferase of Rickettsia rickettsii.